The sequence spans 577 residues: 5'-nucleotidase (577 aa).

The N-terminal stretch at methionine 1–phenylalanine 30 is a signal peptide. Zn(2+) contacts are provided by aspartate 39, histidine 41, aspartate 86, and asparagine 118. N-linked (GlcNAc...) asparagine glycosylation occurs at asparagine 135. Histidine 221 and histidine 244 together coordinate Zn(2+). Asparagine 246 contributes to the substrate binding site. N-linked (GlcNAc...) asparagine glycosylation is found at asparagine 311 and asparagine 347. Disulfide bonds link cysteine 353–cysteine 358 and cysteine 365–cysteine 387. A substrate-binding site is contributed by arginine 354. Residues glutamine 390 and arginine 395 each contribute to the substrate site. Asparagine 403 is a glycosylation site (N-linked (GlcNAc...) asparagine). Phenylalanine 417 is a binding site for substrate. Cysteine 476 and cysteine 479 are oxidised to a cystine. Residue tyrosine 500–aspartate 506 participates in substrate binding. A lipid anchor (GPI-anchor amidated serine) is attached at serine 552. A propeptide spans alanine 553–serine 577 (removed in mature form).

It belongs to the 5'-nucleotidase family. In terms of assembly, homodimer. The cofactor is Zn(2+).

The protein resides in the cell membrane. The catalysed reaction is a ribonucleoside 5'-phosphate + H2O = a ribonucleoside + phosphate. In terms of biological role, hydrolyzes extracellular nucleotides into membrane permeable nucleosides. In Diplobatis ommata (Ocellated electric ray), this protein is 5'-nucleotidase.